The following is a 355-amino-acid chain: Ubiquinone biosynthesis protein COQ4 homolog, mitochondrial (355 aa).

Zn(2+) contacts are provided by His-134, Asp-135, His-138, and Glu-150.

The protein belongs to the COQ4 family. Component of a multi-subunit COQ enzyme complex. Zn(2+) serves as cofactor.

It localises to the mitochondrion inner membrane. It catalyses the reaction a 4-hydroxy-3-methoxy-5-(all-trans-polyprenyl)benzoate + H(+) = a 2-methoxy-6-(all-trans-polyprenyl)phenol + CO2. It functions in the pathway cofactor biosynthesis; ubiquinone biosynthesis. Its function is as follows. Lyase that catalyzes the C1-decarboxylation of 4-hydroxy-3-methoxy-5-(all-trans-polyprenyl)benzoic acid into 2-methoxy-6-(all-trans-polyprenyl)phenol during ubiquinone biosynthesis. The sequence is that of Ubiquinone biosynthesis protein COQ4 homolog, mitochondrial from Plasmodium falciparum (isolate 3D7).